We begin with the raw amino-acid sequence, 525 residues long: GMP synthase [glutamine-hydrolyzing] (525 aa).

One can recognise a Glutamine amidotransferase type-1 domain in the interval 13–202 (TILVLDFGSQ…AVEICQAAQT (190 aa)). The active-site Nucleophile is Cys89. Catalysis depends on residues His176 and Glu178. The GMPS ATP-PPase domain maps to 203–400 (WTMENFIDTE…LGISHELVWR (198 aa)). 231–237 (SGGVDST) serves as a coordination point for ATP. Residues Arg304, Asp462, Lys517, and Glu523 each contribute to the XMP site.

In terms of assembly, homodimer. It depends on Mg(2+) as a cofactor.

Its subcellular location is the cytoplasm. The protein localises to the cytosol. It carries out the reaction XMP + L-glutamine + ATP + H2O = GMP + L-glutamate + AMP + diphosphate + 2 H(+). The protein operates within purine metabolism; GMP biosynthesis; GMP from XMP (L-Gln route): step 1/1. Catalyzes the conversion of xanthine monophosphate (XMP) to GMP in the presence of glutamine and ATP through an adenyl-XMP intermediate. In Eremothecium gossypii (strain ATCC 10895 / CBS 109.51 / FGSC 9923 / NRRL Y-1056) (Yeast), this protein is GMP synthase [glutamine-hydrolyzing] (GUA1).